A 177-amino-acid polypeptide reads, in one-letter code: Large ribosomal subunit protein uL6 (177 aa).

This sequence belongs to the universal ribosomal protein uL6 family. Part of the 50S ribosomal subunit.

Its function is as follows. This protein binds to the 23S rRNA, and is important in its secondary structure. It is located near the subunit interface in the base of the L7/L12 stalk, and near the tRNA binding site of the peptidyltransferase center. This is Large ribosomal subunit protein uL6 from Rhizobium etli (strain CIAT 652).